Consider the following 185-residue polypeptide: Photosystem I assembly protein Ycf4 (185 aa).

Transmembrane regions (helical) follow at residues 20 to 40 and 57 to 77; these read GNFFWACILFLGSLGFLAVGA and ILFFPQGVVMSFYGIAGLFIS.

This sequence belongs to the Ycf4 family.

It is found in the plastid. Its subcellular location is the chloroplast thylakoid membrane. Seems to be required for the assembly of the photosystem I complex. This is Photosystem I assembly protein Ycf4 from Oryza nivara (Indian wild rice).